The sequence spans 105 residues: Intracellular chorismate mutase (105 aa).

The 83-residue stretch at Ser23–His105 folds into the Chorismate mutase domain. 3 residues coordinate chorismate: Arg61, Val70, and Glu74.

In terms of assembly, homodimer. Interacts with AroG.

Its subcellular location is the cytoplasm. The catalysed reaction is chorismate = prephenate. It participates in metabolic intermediate biosynthesis; prephenate biosynthesis; prephenate from chorismate: step 1/1. Its activity is regulated as follows. The formation of the complex with AroG activates the chorismate mutase activity. In terms of biological role, catalyzes the Claisen rearrangement of chorismate to prephenate. Probably involved in the aromatic amino acid biosynthesis. The protein is Intracellular chorismate mutase of Mycobacterium bovis (strain ATCC BAA-935 / AF2122/97).